The primary structure comprises 299 residues: Oxygen-dependent coproporphyrinogen-III oxidase (299 aa).

Serine 92 lines the substrate pocket. The a divalent metal cation site is built by histidine 96 and histidine 106. The active-site Proton donor is the histidine 106. 108 to 110 (NVR) contributes to the substrate binding site. Residues histidine 145 and histidine 175 each contribute to the a divalent metal cation site. An important for dimerization region spans residues 239 to 274 (YVEFNLVYDRGTLFGLQSGGRAESILMSLPPQVRWE). 257 to 259 (GGR) provides a ligand contact to substrate.

The protein belongs to the aerobic coproporphyrinogen-III oxidase family. In terms of assembly, homodimer. A divalent metal cation is required as a cofactor.

Its subcellular location is the cytoplasm. The catalysed reaction is coproporphyrinogen III + O2 + 2 H(+) = protoporphyrinogen IX + 2 CO2 + 2 H2O. The protein operates within porphyrin-containing compound metabolism; protoporphyrin-IX biosynthesis; protoporphyrinogen-IX from coproporphyrinogen-III (O2 route): step 1/1. Involved in the heme biosynthesis. Catalyzes the aerobic oxidative decarboxylation of propionate groups of rings A and B of coproporphyrinogen-III to yield the vinyl groups in protoporphyrinogen-IX. This Xanthomonas campestris pv. campestris (strain B100) protein is Oxygen-dependent coproporphyrinogen-III oxidase.